A 102-amino-acid polypeptide reads, in one-letter code: Large ribosomal subunit protein bL21 (102 aa).

This sequence belongs to the bacterial ribosomal protein bL21 family. In terms of assembly, part of the 50S ribosomal subunit. Contacts protein L20.

Functionally, this protein binds to 23S rRNA in the presence of protein L20. The chain is Large ribosomal subunit protein bL21 from Saccharopolyspora erythraea (strain ATCC 11635 / DSM 40517 / JCM 4748 / NBRC 13426 / NCIMB 8594 / NRRL 2338).